A 130-amino-acid chain; its full sequence is Small ribosomal subunit protein uS11 (130 aa).

The protein belongs to the universal ribosomal protein uS11 family. In terms of assembly, part of the 30S ribosomal subunit. Interacts with proteins S7 and S18. Binds to IF-3.

Functionally, located on the platform of the 30S subunit, it bridges several disparate RNA helices of the 16S rRNA. Forms part of the Shine-Dalgarno cleft in the 70S ribosome. The chain is Small ribosomal subunit protein uS11 from Sulfurimonas denitrificans (strain ATCC 33889 / DSM 1251) (Thiomicrospira denitrificans (strain ATCC 33889 / DSM 1251)).